The chain runs to 54 residues: ATP synthase F(0) complex subunit 8 (54 aa).

The helical transmembrane segment at 9 to 25 threads the bilayer; it reads WVFLFFLVWLVLGFLGL.

The protein belongs to the ATPase protein 8 family. Component of the ATP synthase complex composed at least of ATP5F1A/subunit alpha, ATP5F1B/subunit beta, ATP5MC1/subunit c (homooctomer), MT-ATP6/subunit a, MT-ATP8/subunit 8, ATP5ME/subunit e, ATP5MF/subunit f, ATP5MG/subunit g, ATP5MK/subunit k, ATP5MJ/subunit j, ATP5F1C/subunit gamma, ATP5F1D/subunit delta, ATP5F1E/subunit epsilon, ATP5PF/subunit F6, ATP5PB/subunit b, ATP5PD/subunit d, ATP5PO/subunit OSCP. ATP synthase complex consists of a soluble F(1) head domain (subunits alpha(3) and beta(3)) - the catalytic core - and a membrane F(0) domain - the membrane proton channel (subunits c, a, 8, e, f, g, k and j). These two domains are linked by a central stalk (subunits gamma, delta, and epsilon) rotating inside the F1 region and a stationary peripheral stalk (subunits F6, b, d, and OSCP).

The protein resides in the mitochondrion membrane. Subunit 8, of the mitochondrial membrane ATP synthase complex (F(1)F(0) ATP synthase or Complex V) that produces ATP from ADP in the presence of a proton gradient across the membrane which is generated by electron transport complexes of the respiratory chain. ATP synthase complex consist of a soluble F(1) head domain - the catalytic core - and a membrane F(1) domain - the membrane proton channel. These two domains are linked by a central stalk rotating inside the F(1) region and a stationary peripheral stalk. During catalysis, ATP synthesis in the catalytic domain of F(1) is coupled via a rotary mechanism of the central stalk subunits to proton translocation. In vivo, can only synthesize ATP although its ATP hydrolase activity can be activated artificially in vitro. Part of the complex F(0) domain. The chain is ATP synthase F(0) complex subunit 8 from Branchiostoma lanceolatum (Common lancelet).